The sequence spans 1383 residues: DNA-directed RNA polymerase subunit beta'' (1383 aa).

Cys-220, Cys-289, Cys-296, and Cys-299 together coordinate Zn(2+).

Belongs to the RNA polymerase beta' chain family. RpoC2 subfamily. In terms of assembly, in plastids the minimal PEP RNA polymerase catalytic core is composed of four subunits: alpha, beta, beta', and beta''. When a (nuclear-encoded) sigma factor is associated with the core the holoenzyme is formed, which can initiate transcription. The cofactor is Zn(2+).

It localises to the plastid. Its subcellular location is the chloroplast. It catalyses the reaction RNA(n) + a ribonucleoside 5'-triphosphate = RNA(n+1) + diphosphate. Its function is as follows. DNA-dependent RNA polymerase catalyzes the transcription of DNA into RNA using the four ribonucleoside triphosphates as substrates. This Oenothera biennis (German evening primrose) protein is DNA-directed RNA polymerase subunit beta''.